Here is a 319-residue protein sequence, read N- to C-terminus: tRNA-cytidine(32) 2-sulfurtransferase (319 aa).

Positions 43–48 (SGGKDS) match the PP-loop motif motif. [4Fe-4S] cluster is bound by residues Cys118, Cys121, and Cys209.

Belongs to the TtcA family. Homodimer. Requires Mg(2+) as cofactor. [4Fe-4S] cluster is required as a cofactor.

It localises to the cytoplasm. The enzyme catalyses cytidine(32) in tRNA + S-sulfanyl-L-cysteinyl-[cysteine desulfurase] + AH2 + ATP = 2-thiocytidine(32) in tRNA + L-cysteinyl-[cysteine desulfurase] + A + AMP + diphosphate + H(+). It participates in tRNA modification. Functionally, catalyzes the ATP-dependent 2-thiolation of cytidine in position 32 of tRNA, to form 2-thiocytidine (s(2)C32). The sulfur atoms are provided by the cysteine/cysteine desulfurase (IscS) system. This chain is tRNA-cytidine(32) 2-sulfurtransferase, found in Neisseria meningitidis serogroup A / serotype 4A (strain DSM 15465 / Z2491).